The chain runs to 314 residues: Methionyl-tRNA formyltransferase (314 aa).

112 to 115 serves as a coordination point for (6S)-5,6,7,8-tetrahydrofolate; sequence SLLP.

It belongs to the Fmt family.

It catalyses the reaction L-methionyl-tRNA(fMet) + (6R)-10-formyltetrahydrofolate = N-formyl-L-methionyl-tRNA(fMet) + (6S)-5,6,7,8-tetrahydrofolate + H(+). Functionally, attaches a formyl group to the free amino group of methionyl-tRNA(fMet). The formyl group appears to play a dual role in the initiator identity of N-formylmethionyl-tRNA by promoting its recognition by IF2 and preventing the misappropriation of this tRNA by the elongation apparatus. This is Methionyl-tRNA formyltransferase from Legionella pneumophila subsp. pneumophila (strain Philadelphia 1 / ATCC 33152 / DSM 7513).